Consider the following 180-residue polypeptide: Ubiquitin-conjugating enzyme E2 20 (180 aa).

Residues 1–33 are disordered; sequence MAAVNGYQGNTPADPPASNGSKQPAAPTKTVDS. The UBC core domain maps to 35-180; sequence SVLKRLQSEL…VEKLYKPPSA (146 aa). The active-site Glycyl thioester intermediate is the C119.

It belongs to the ubiquitin-conjugating enzyme family. In terms of tissue distribution, expressed in all tissues with cell division activities and in mature leaves.

It carries out the reaction S-ubiquitinyl-[E1 ubiquitin-activating enzyme]-L-cysteine + [E2 ubiquitin-conjugating enzyme]-L-cysteine = [E1 ubiquitin-activating enzyme]-L-cysteine + S-ubiquitinyl-[E2 ubiquitin-conjugating enzyme]-L-cysteine.. It participates in protein modification; protein ubiquitination. Its function is as follows. Accepts the ubiquitin from the E1 complex and catalyzes its covalent attachment to other proteins. The sequence is that of Ubiquitin-conjugating enzyme E2 20 (UBC20) from Arabidopsis thaliana (Mouse-ear cress).